The sequence spans 512 residues: ATP synthase subunit beta 2 (512 aa).

174–181 contacts ATP; that stretch reads GGAGVGKT. Over residues 479–494 the composition is skewed to basic and acidic residues; sequence RRKEEAAREADARRDA. The segment at 479–512 is disordered; it reads RRKEEAAREADARRDAAAGAASGSAGPQGAQHGR.

Belongs to the ATPase alpha/beta chains family. In terms of assembly, F-type ATPases have 2 components, CF(1) - the catalytic core - and CF(0) - the membrane proton channel. CF(1) has five subunits: alpha(3), beta(3), gamma(1), delta(1), epsilon(1). CF(0) has three main subunits: a(1), b(2) and c(9-12). The alpha and beta chains form an alternating ring which encloses part of the gamma chain. CF(1) is attached to CF(0) by a central stalk formed by the gamma and epsilon chains, while a peripheral stalk is formed by the delta and b chains.

Its subcellular location is the cell inner membrane. The catalysed reaction is ATP + H2O + 4 H(+)(in) = ADP + phosphate + 5 H(+)(out). In terms of biological role, produces ATP from ADP in the presence of a proton gradient across the membrane. The catalytic sites are hosted primarily by the beta subunits. The polypeptide is ATP synthase subunit beta 2 (Burkholderia thailandensis (strain ATCC 700388 / DSM 13276 / CCUG 48851 / CIP 106301 / E264)).